The chain runs to 516 residues: Cyclic AMP response element-binding protein A (516 aa).

Phosphoserine occurs at positions 75, 79, and 82. Disordered stretches follow at residues 213–237 (KDEP…SQHQ), 294–338 (KSEK…HLFA), and 353–408 (PAGG…KGST). Residues 221 to 237 (SSCPASPTSQASSSQHQ) are compositionally biased toward low complexity. Residues 361-392 (RVSRTAASITRSSSGSASASGSSTSSTVTTTR) show a composition bias toward low complexity. The bZIP domain maps to 441 to 504 (SLKKIRRKIK…ANLLSQLHKL (64 aa)). The interval 443-463 (KKIRRKIKNKISAQESRRKKK) is basic motif. Residues 469-476 (LERRVEIL) are leucine-zipper.

This sequence belongs to the bZIP family. May bind DNA as heterodimers with other bZIP proteins. In terms of tissue distribution, in all cell types examined, including developing salivary gland in embryos and in adults, brain and optic lobe cell bodies, salivary gland, midgut epithelial cells of the cardia, female ovarian columnar follicle cells and male seminal vesicle, ejaculatory duct, and ejaculatory bulb.

It is found in the nucleus. In terms of biological role, transcriptional activator. Binds to fat body-specific enhancers of alcohol dehydrogenase (ADH) and yolk protein genes. BBF-2 may play a role in fat body gene expression. It binds the consensus sequence 5'-T[AC]NACGTAN[TG]C-3'. This chain is Cyclic AMP response element-binding protein A (CrebA), found in Drosophila melanogaster (Fruit fly).